Here is a 605-residue protein sequence, read N- to C-terminus: YTH domain-containing protein ECT4 (605 aa).

Disordered regions lie at residues 249–274 and 357–384; these read GVAS…SNSH and ELNR…QTFD. The span at 256–274 shows a compositional bias: polar residues; sequence KANNNVPATRNQNSSSNSH. The span at 368–383 shows a compositional bias: basic and acidic residues; the sequence is KATEEVSSEEVKKQTF. A YTH domain is found at 414 to 551; sequence AKFFIIKSYS…EQGLKVVKIF (138 aa). Residues 420-422, aspartate 426, 436-437, asparagine 469, tryptophan 493, tryptophan 498, and tryptophan 506 each bind RNA; these read KSY and WA. Positions 580–605 are disordered; sequence KQQQSQKQVWEGKTNDEKPGTVDSTM.

As to expression, expressed in the shoot apex, at the sites of leaf formation, and in emerging leaves.

It localises to the cytoplasm. Functionally, specifically recognizes and binds N6-methyladenosine (m6A)-containing RNAs, and regulates mRNA stability. M6A is a modification present at internal sites of mRNAs and some non-coding RNAs and plays a role in mRNA stability and processing. Required for the correct timing of leaf formation and normal leaf morphology. In Arabidopsis thaliana (Mouse-ear cress), this protein is YTH domain-containing protein ECT4.